A 322-amino-acid polypeptide reads, in one-letter code: Replication factor C small subunit (322 aa).

50-57 (GPAGTGKT) contributes to the ATP binding site.

Belongs to the activator 1 small subunits family. RfcS subfamily. Heteromultimer composed of small subunits (RfcS) and large subunits (RfcL).

In terms of biological role, part of the RFC clamp loader complex which loads the PCNA sliding clamp onto DNA. In Halobacterium salinarum (strain ATCC 700922 / JCM 11081 / NRC-1) (Halobacterium halobium), this protein is Replication factor C small subunit.